A 490-amino-acid chain; its full sequence is Nicotinate phosphoribosyltransferase (490 aa).

Histidine 206 carries the phosphohistidine modification.

Belongs to the NAPRTase family. In terms of processing, transiently phosphorylated on a His residue during the reaction cycle. Phosphorylation strongly increases the affinity for substrates and increases the rate of nicotinate D-ribonucleotide production. Dephosphorylation regenerates the low-affinity form of the enzyme, leading to product release.

The catalysed reaction is nicotinate + 5-phospho-alpha-D-ribose 1-diphosphate + ATP + H2O = nicotinate beta-D-ribonucleotide + ADP + phosphate + diphosphate. The protein operates within cofactor biosynthesis; NAD(+) biosynthesis; nicotinate D-ribonucleotide from nicotinate: step 1/1. Its function is as follows. Catalyzes the synthesis of beta-nicotinate D-ribonucleotide from nicotinate and 5-phospho-D-ribose 1-phosphate at the expense of ATP. The polypeptide is Nicotinate phosphoribosyltransferase (pncB) (Bacillus subtilis (strain 168)).